Consider the following 559-residue polypeptide: Potassium-transporting ATPase potassium-binding subunit (559 aa).

The next 13 membrane-spanning stretches (helical) occupy residues 5–25 (GFLL…PLGS), 27–47 (LARL…RILW), 63–83 (LLAL…LLFW), 132–152 (GLTV…FALI), 170–190 (LVRI…LFFI), 253–273 (LAQM…FGEA), 283–303 (LLWA…WAEV), 327–347 (FGVL…CGAV), 356–376 (ALGG…FGGV), 379–399 (GLYG…LMIG), 416–436 (MTAL…ALAM), 484–504 (LLAF…MAIA), and 524–544 (GALF…LTFI).

Belongs to the KdpA family. As to quaternary structure, the system is composed of three essential subunits: KdpA, KdpB and KdpC.

It localises to the cell inner membrane. Functionally, part of the high-affinity ATP-driven potassium transport (or Kdp) system, which catalyzes the hydrolysis of ATP coupled with the electrogenic transport of potassium into the cytoplasm. This subunit binds the periplasmic potassium ions and delivers the ions to the membrane domain of KdpB through an intramembrane tunnel. The polypeptide is Potassium-transporting ATPase potassium-binding subunit (Salmonella typhi).